A 415-amino-acid polypeptide reads, in one-letter code: Lipid-A-disaccharide synthase (415 aa).

A disordered region spans residues 1–21; sequence MNSLPESGSDGQSSADPSQKA.

It belongs to the LpxB family.

The enzyme catalyses a lipid X + a UDP-2-N,3-O-bis[(3R)-3-hydroxyacyl]-alpha-D-glucosamine = a lipid A disaccharide + UDP + H(+). The protein operates within bacterial outer membrane biogenesis; LPS lipid A biosynthesis. Its function is as follows. Condensation of UDP-2,3-diacylglucosamine and 2,3-diacylglucosamine-1-phosphate to form lipid A disaccharide, a precursor of lipid A, a phosphorylated glycolipid that anchors the lipopolysaccharide to the outer membrane of the cell. This is Lipid-A-disaccharide synthase from Gluconobacter oxydans (strain 621H) (Gluconobacter suboxydans).